The following is a 397-amino-acid chain: Putative teichuronic acid biosynthesis glycosyltransferase TuaH (397 aa).

Belongs to the glycosyltransferase group 1 family.

It functions in the pathway cell wall biogenesis; teichuronic acid biosynthesis. This is Putative teichuronic acid biosynthesis glycosyltransferase TuaH (tuaH) from Bacillus subtilis (strain 168).